Here is a 395-residue protein sequence, read N- to C-terminus: ATP phosphoribosyltransferase regulatory subunit (395 aa).

This sequence belongs to the class-II aminoacyl-tRNA synthetase family. HisZ subfamily. Heteromultimer composed of HisG and HisZ subunits.

The protein resides in the cytoplasm. It functions in the pathway amino-acid biosynthesis; L-histidine biosynthesis; L-histidine from 5-phospho-alpha-D-ribose 1-diphosphate: step 1/9. Its function is as follows. Required for the first step of histidine biosynthesis. May allow the feedback regulation of ATP phosphoribosyltransferase activity by histidine. This is ATP phosphoribosyltransferase regulatory subunit from Pseudomonas syringae pv. tomato (strain ATCC BAA-871 / DC3000).